Reading from the N-terminus, the 64-residue chain is Thrombin-like enzyme collinein-4 (64 aa).

2 disulfides stabilise this stretch: cysteine 5/cysteine 23 and cysteine 34/cysteine 51.

Monomer. As to expression, expressed by the vanom gland.

The protein localises to the secreted. Its function is as follows. Thrombin-like snake venom serine protease. The sequence is that of Thrombin-like enzyme collinein-4 from Crotalus durissus collilineatus (Brazilian rattlesnake).